Here is a 1255-residue protein sequence, read N- to C-terminus: DNA-directed RNA polymerase subunit beta' (1255 aa).

Zn(2+) contacts are provided by Cys68, Cys70, Cys83, and Cys86. The Mg(2+) site is built by Asp457, Asp459, and Asp461. Zn(2+) is bound by residues Cys803, Cys885, Cys892, and Cys895. The segment covering 1220 to 1240 (NSDEEVSFTEDEYFEDEENDL) has biased composition (acidic residues). Residues 1220-1255 (NSDEEVSFTEDEYFEDEENDLSTENFDDLKFSEEEE) form a disordered region. Basic and acidic residues predominate over residues 1246–1255 (DDLKFSEEEE).

Belongs to the RNA polymerase beta' chain family. The RNAP catalytic core consists of 2 alpha, 1 beta, 1 beta' and 1 omega subunit. When a sigma factor is associated with the core the holoenzyme is formed, which can initiate transcription. Mg(2+) serves as cofactor. Requires Zn(2+) as cofactor.

It carries out the reaction RNA(n) + a ribonucleoside 5'-triphosphate = RNA(n+1) + diphosphate. DNA-dependent RNA polymerase catalyzes the transcription of DNA into RNA using the four ribonucleoside triphosphates as substrates. The sequence is that of DNA-directed RNA polymerase subunit beta' from Lachnoclostridium phytofermentans (strain ATCC 700394 / DSM 18823 / ISDg) (Clostridium phytofermentans).